Here is a 354-residue protein sequence, read N- to C-terminus: MASSSSATSGDDRPPAAGGGTPAQAHAEWAASMHAYYAAAASAAGHPYAAWPLPPQAQQHGLVAAGAGAAYGAGAVPHVPPPPAGTRHAHASMAAGVPYMAGESASAAGKGKRVGKTQRVPSGEINSSSGSGDAGSQGSSEKGDAGANQKGSSSSAKRRKSGAAKTEGEPSQAATVQNAVTEPPLEDKERSASKLLVLAPGRAALTSAAPNLNIGMDPLSASPSSLVQGEVNAAASSQSNASLSQMDERELKRERRKQSNRESARRSRLRKQQECEELAQKVSELTAANGTLRSELDQLKKDCKTMETENKKLMGKILSHDDKMQQSEGPSVVTTLSIQVEAPEPHQGGHGKAS.

Disordered regions lie at residues 1–24, 106–193, and 230–273; these read MASS…TPAQ, SAAG…RSAS, and EVNA…RKQQ. Low complexity-rich tracts occupy residues 127 to 140 and 232 to 245; these read SSSG…QGSS and NAAA…SLSQ. Residues 246-265 are compositionally biased toward basic and acidic residues; sequence MDERELKRERRKQSNRESAR. The region spanning 250–313 is the bZIP domain; the sequence is ELKRERRKQS…KTMETENKKL (64 aa). Residues 252–271 are basic motif; it reads KRERRKQSNRESARRSRLRK. Positions 278–299 are leucine-zipper; the sequence is LAQKVSELTAANGTLRSELDQL.

This sequence belongs to the bZIP family. In terms of assembly, heterodimer.

It localises to the nucleus. Functionally, interacts specifically with the 8-bp sequence 5'-CACGTGGC-3'in the abscisic acid response element (ABARE). Also binds to the hexamer motif 5'-ACGTCA-3' of histone gene promoters. This is DNA-binding protein EMBP-1 from Triticum aestivum (Wheat).